A 503-amino-acid chain; its full sequence is Probable cytosol aminopeptidase (503 aa).

Mn(2+) contacts are provided by K274 and D279. K286 is a catalytic residue. 3 residues coordinate Mn(2+): D297, D356, and E358. The active site involves R360.

This sequence belongs to the peptidase M17 family. Requires Mn(2+) as cofactor.

Its subcellular location is the cytoplasm. The enzyme catalyses Release of an N-terminal amino acid, Xaa-|-Yaa-, in which Xaa is preferably Leu, but may be other amino acids including Pro although not Arg or Lys, and Yaa may be Pro. Amino acid amides and methyl esters are also readily hydrolyzed, but rates on arylamides are exceedingly low.. It catalyses the reaction Release of an N-terminal amino acid, preferentially leucine, but not glutamic or aspartic acids.. Presumably involved in the processing and regular turnover of intracellular proteins. Catalyzes the removal of unsubstituted N-terminal amino acids from various peptides. The protein is Probable cytosol aminopeptidase of Burkholderia mallei (strain SAVP1).